Consider the following 323-residue polypeptide: Olfactory receptor 2T35 (323 aa).

Over 1–26 the chain is Extracellular; that stretch reads MGMEGLLQNSTNFVLTGLITHPAFPG. A glycan (N-linked (GlcNAc...) asparagine) is linked at asparagine 9. The helical transmembrane segment at 27–50 threads the bilayer; the sequence is LLFAVVFSIFVVAITANLVMILLI. Residues 51–58 are Cytoplasmic-facing; it reads HMDSRLHT. Residues 59–80 traverse the membrane as a helical segment; it reads PMYFLLSQLSIMDTIYICITVP. Topologically, residues 81-101 are extracellular; it reads KMLQDLLSKDKTISFLGCAVQ. Cysteines 98 and 189 form a disulfide. Residues 102-120 traverse the membrane as a helical segment; the sequence is IFYLTLIGGEFFLLGLMAY. At 121–139 the chain is on the cytoplasmic side; it reads DRYVAVCNPLRYPLLMNRR. Residues 140–158 form a helical membrane-spanning segment; the sequence is VCLFMVVGSWVGGSLDGFM. Topologically, residues 159–195 are extracellular; it reads LTPVTMSFPFCRSREINHFFCEIPAVLKLSCTDTSLY. Residues 196–219 traverse the membrane as a helical segment; the sequence is ETLMYACCVLMLLIPLSVISVSYT. At 220-236 the chain is on the cytoplasmic side; sequence HILLTVHRMNSAEGRRK. The helical transmembrane segment at 237–259 threads the bilayer; it reads AFATCSSHIMVVSVFYGAAFYTN. The Extracellular segment spans residues 260 to 272; the sequence is VLPHSYHTPEKDK. Residues 273–292 form a helical membrane-spanning segment; the sequence is VVSAFYTILTPMLNPLIYSL. The Cytoplasmic portion of the chain corresponds to 293 to 323; the sequence is RNKDVAAALRKVLGRCGSSQSIRVATVIRKG.

The protein belongs to the G-protein coupled receptor 1 family.

Its subcellular location is the cell membrane. Odorant receptor. This chain is Olfactory receptor 2T35 (OR2T35), found in Homo sapiens (Human).